The primary structure comprises 473 residues: Dolichyl-diphosphooligosaccharide--protein glycosyltransferase subunit 1B (473 aa).

A signal peptide spans 1–27 (MAPSLSTAVSSLLLLLLLAAAISVSSS). Topologically, residues 28–439 (PPMPEDSIRV…PFQVYYEFNP (412 aa)) are lumenal. N-linked (GlcNAc...) asparagine glycosylation is found at asparagine 307 and asparagine 361. A helical transmembrane segment spans residues 440–460 (IFMLAEPLMLISAVFLFFVAC). Residues 461-473 (IAYLHMDLSIGKS) are Cytoplasmic-facing.

This sequence belongs to the OST1 family. In terms of assembly, component of the oligosaccharyltransferase (OST) complex.

The protein resides in the endoplasmic reticulum membrane. Its pathway is protein modification; protein glycosylation. Subunit of the oligosaccharyl transferase (OST) complex that catalyzes the initial transfer of a defined glycan (Glc(3)Man(9)GlcNAc(2) in eukaryotes) from the lipid carrier dolichol-pyrophosphate to an asparagine residue within an Asn-X-Ser/Thr consensus motif in nascent polypeptide chains, the first step in protein N-glycosylation. N-glycosylation occurs cotranslationally and the complex associates with the Sec61 complex at the channel-forming translocon complex that mediates protein translocation across the endoplasmic reticulum (ER). All subunits are required for a maximal enzyme activity. In Oryza sativa subsp. japonica (Rice), this protein is Dolichyl-diphosphooligosaccharide--protein glycosyltransferase subunit 1B (OST1B).